A 121-amino-acid chain; its full sequence is ATP synthase epsilon chain (121 aa).

The protein belongs to the ATPase epsilon chain family. F-type ATPases have 2 components, CF(1) - the catalytic core - and CF(0) - the membrane proton channel. CF(1) has five subunits: alpha(3), beta(3), gamma(1), delta(1), epsilon(1). CF(0) has three main subunits: a, b and c.

It localises to the cell membrane. Produces ATP from ADP in the presence of a proton gradient across the membrane. The chain is ATP synthase epsilon chain from Mycolicibacterium smegmatis (strain ATCC 700084 / mc(2)155) (Mycobacterium smegmatis).